We begin with the raw amino-acid sequence, 307 residues long: Putative gluconeogenesis factor (307 aa).

Belongs to the gluconeogenesis factor family.

Its subcellular location is the cytoplasm. Functionally, required for morphogenesis under gluconeogenic growth conditions. This is Putative gluconeogenesis factor from Yersinia pestis.